Reading from the N-terminus, the 528-residue chain is uncharacterized protein (528 aa).

6-35 (DYVVVGTGSAGAVVASRLSTDPATTVVALE) is a binding site for FAD. H468 (proton acceptor) is an active-site residue.

Belongs to the GMC oxidoreductase family. Requires FAD as cofactor.

This is an uncharacterized protein from Mycobacterium bovis (strain ATCC BAA-935 / AF2122/97).